The following is a 528-amino-acid chain: Calcium-dependent protein kinase 17 (528 aa).

Residues 1 to 65 (MGNCCSHGRD…GPIGPVLGRP (65 aa)) form a disordered region. A lipid anchor (N-myristoyl glycine) is attached at G2. A compositionally biased stretch (low complexity) spans 20–45 (NGASASNAANSTGPTAEASVPQSKHA). A Protein kinase domain is found at 73 to 331 (YSLGKELGRG…AAQVLNHPWI (259 aa)). Residues 79-87 (LGRGQFGVT) and K102 each bind ATP. Residue D197 is the Proton acceptor of the active site. S237 carries the phosphoserine modification. Residues 337–367 (APDVPLDNAVMSRLKQFKAMNNFKKVALRVI) are autoinhibitory domain. 4 consecutive EF-hand domains span residues 374–409 (EEIMGLKEMFKGMDTDSSGTITLEELRQGLAKQGTR), 410–445 (LSEYEVQQLMEAADADGNGTIDYGEFIAATMHINRL), 446–481 (DREEHLYSAFQHFDKDNSGYITMEELEQALREFGMN), and 485–516 (DIKEIISEVDGDNDGRINYDEFVAMMRKGNPD). 20 residues coordinate Ca(2+): D387, D389, S391, T393, E398, D423, D425, N427, T429, E434, D459, D461, S463, Y465, E470, D494, D496, D498, R500, and E505.

The protein belongs to the protein kinase superfamily. Ser/Thr protein kinase family. CDPK subfamily.

The protein localises to the membrane. The catalysed reaction is L-seryl-[protein] + ATP = O-phospho-L-seryl-[protein] + ADP + H(+). The enzyme catalyses L-threonyl-[protein] + ATP = O-phospho-L-threonyl-[protein] + ADP + H(+). With respect to regulation, activated by calcium. Autophosphorylation may play an important role in the regulation of the kinase activity. Functionally, may play a role in signal transduction pathways that involve calcium as a second messenger. This is Calcium-dependent protein kinase 17 (CPK17) from Arabidopsis thaliana (Mouse-ear cress).